The following is a 158-amino-acid chain: Na(+)/H(+) antiporter subunit E (158 aa).

2 consecutive transmembrane segments (helical) span residues 22–41 (YTAV…LFVL) and 54–76 (IWAI…IDVI).

It belongs to the CPA3 antiporters (TC 2.A.63) subunit E family. In terms of assembly, forms a heterooligomeric complex that consists of seven subunits: MrpA, MrpB, MrpC, MrpD, MrpE, MrpF and MrpG.

Its subcellular location is the cell membrane. Its function is as follows. Mnh complex is a Na(+)Li(+)/H(+) antiporter involved in Na(+) and/or Li(+) excretion and Na(+) resistance. Na(+)/H(+) antiport consumes a transmembrane electrical potential, and is thus inferred to be electrogenic. Does not transport K(+), Ca(2+) or Mg(2+). Mrp complex is a Na(+)/H(+) antiporter involved in Na(+) excretion and Na(+) resistance. The protein is Na(+)/H(+) antiporter subunit E (mrpE) of Alkalihalophilus pseudofirmus (strain ATCC BAA-2126 / JCM 17055 / OF4) (Bacillus pseudofirmus).